Reading from the N-terminus, the 1620-residue chain is ABC-type organic anion transporter ABCA8B (1620 aa).

7 helical membrane passes run 30–50, 223–243, 267–287, 298–318, 326–346, 352–372, and 396–416; these read SLME…YPHG, FFIF…SINV, SWGL…ALVI, FMVV…LAFL, SVLT…LGFT, LPAP…TLGM, and LIIA…ALMM. The ABC transporter 1 domain occupies 479-714; the sequence is IRIRNISKEY…WGVGYHLSLQ (236 aa). Position 515–522 (515–522) interacts with ATP; sequence GHSGAGKS. Asn-723 carries an N-linked (GlcNAc...) asparagine glycan. 8 consecutive transmembrane segments (helical) span residues 860-880, 979-999, 1023-1043, 1069-1089, 1105-1125, 1135-1155, 1164-1184, and 1194-1214; these read TLLS…FENI, CFPV…KPSA, TAFW…SSVT, MVDI…DYLF, IPCS…ISFI, IWSL…LLAF, IIFL…LHLF, and VIEP…FIFT. An ABC transporter 2 domain is found at 1283–1516; it reads LRKEYAGKQK…FGKDYLLEMK (234 aa). 1321-1328 contributes to the ATP binding site; it reads GHNGAGKS.

Belongs to the ABC transporter superfamily. ABCA family. Expressed in heart, brain, lung, liver and skeletal muscle. Highly expressed in the liver, and is also abundant in heart and skeletal muscle. Highly expressed in liver.

The protein localises to the cell membrane. It localises to the basolateral cell membrane. The enzyme catalyses taurocholate(in) + ATP + H2O = taurocholate(out) + ADP + phosphate + H(+). The catalysed reaction is cholesterol(in) + ATP + H2O = cholesterol(out) + ADP + phosphate + H(+). Its activity is regulated as follows. Cholesterol efflux is increased by extracellularly applied taurocholate. In terms of biological role, mediates cholesterol and taurocholate efflux. Through the interaction with ABCA1 potentiates the cholesterol efflux to lipid-free APOA1, in turn regulates high-density lipoprotein cholesterol levels. This chain is ABC-type organic anion transporter ABCA8B, found in Mus musculus (Mouse).